Consider the following 370-residue polypeptide: tRNA-specific 2-thiouridylase MnmA 1 (370 aa).

ATP contacts are provided by residues Gly9–Ser16 and Met35. Residues Asn95 to Asp97 form an interaction with target base in tRNA region. Cys100 (nucleophile) is an active-site residue. Cys100 and Cys196 form a disulfide bridge. Gly124 is a binding site for ATP. Residues Lys146–Gln148 are interaction with tRNA. The active-site Cysteine persulfide intermediate is the Cys196. Positions Arg306 to Tyr307 are interaction with tRNA.

This sequence belongs to the MnmA/TRMU family.

Its subcellular location is the cytoplasm. It catalyses the reaction S-sulfanyl-L-cysteinyl-[protein] + uridine(34) in tRNA + AH2 + ATP = 2-thiouridine(34) in tRNA + L-cysteinyl-[protein] + A + AMP + diphosphate + H(+). In terms of biological role, catalyzes the 2-thiolation of uridine at the wobble position (U34) of tRNA, leading to the formation of s(2)U34. This chain is tRNA-specific 2-thiouridylase MnmA 1, found in Geobacillus kaustophilus (strain HTA426).